Consider the following 513-residue polypeptide: Light-independent protochlorophyllide reductase subunit B (513 aa).

D36 provides a ligand contact to [4Fe-4S] cluster. The active-site Proton donor is D299. 434-435 (GM) contacts substrate.

Belongs to the ChlB/BchB/BchZ family. As to quaternary structure, protochlorophyllide reductase is composed of three subunits; ChlL, ChlN and ChlB. Forms a heterotetramer of two ChlB and two ChlN subunits. It depends on [4Fe-4S] cluster as a cofactor.

The protein localises to the plastid. It localises to the chloroplast. It carries out the reaction chlorophyllide a + oxidized 2[4Fe-4S]-[ferredoxin] + 2 ADP + 2 phosphate = protochlorophyllide a + reduced 2[4Fe-4S]-[ferredoxin] + 2 ATP + 2 H2O. Its pathway is porphyrin-containing compound metabolism; chlorophyll biosynthesis (light-independent). Component of the dark-operative protochlorophyllide reductase (DPOR) that uses Mg-ATP and reduced ferredoxin to reduce ring D of protochlorophyllide (Pchlide) to form chlorophyllide a (Chlide). This reaction is light-independent. The NB-protein (ChlN-ChlB) is the catalytic component of the complex. The polypeptide is Light-independent protochlorophyllide reductase subunit B (Anthoceros angustus (Hornwort)).